The following is a 246-amino-acid chain: uncharacterized protein (246 aa).

Serine 194 carries the phosphoserine modification.

This is an uncharacterized protein from Schizosaccharomyces pombe (strain 972 / ATCC 24843) (Fission yeast).